The primary structure comprises 461 residues: L-seryl-tRNA(Sec) selenium transferase (461 aa).

N6-(pyridoxal phosphate)lysine is present on Lys294.

The protein belongs to the SelA family. Requires pyridoxal 5'-phosphate as cofactor.

Its subcellular location is the cytoplasm. The enzyme catalyses L-seryl-tRNA(Sec) + selenophosphate + H(+) = L-selenocysteinyl-tRNA(Sec) + phosphate. Its pathway is aminoacyl-tRNA biosynthesis; selenocysteinyl-tRNA(Sec) biosynthesis; selenocysteinyl-tRNA(Sec) from L-seryl-tRNA(Sec) (bacterial route): step 1/1. Its function is as follows. Converts seryl-tRNA(Sec) to selenocysteinyl-tRNA(Sec) required for selenoprotein biosynthesis. In Actinobacillus pleuropneumoniae serotype 7 (strain AP76), this protein is L-seryl-tRNA(Sec) selenium transferase.